The chain runs to 544 residues: Chaperonin GroEL 1 (544 aa).

Residues 30 to 33 (TLGP), Lys-51, 87 to 91 (DGTTT), Gly-415, 481 to 483 (DAL), and Asp-497 each bind ATP.

Belongs to the chaperonin (HSP60) family. As to quaternary structure, forms a cylinder of 14 subunits composed of two heptameric rings stacked back-to-back. Interacts with the co-chaperonin GroES.

The protein resides in the cytoplasm. It carries out the reaction ATP + H2O + a folded polypeptide = ADP + phosphate + an unfolded polypeptide.. Functionally, together with its co-chaperonin GroES, plays an essential role in assisting protein folding. The GroEL-GroES system forms a nano-cage that allows encapsulation of the non-native substrate proteins and provides a physical environment optimized to promote and accelerate protein folding. The polypeptide is Chaperonin GroEL 1 (Chlamydia pneumoniae (Chlamydophila pneumoniae)).